The sequence spans 731 residues: SUN domain-containing protein 2 (731 aa).

2 disordered regions span residues Met1–Ser69 and Ser106–Ser142. An LMNA-binding region spans residues Met1 to Leu128. Residues Met1–Ser226 lie on the Nuclear side of the membrane. Ser12 is modified (phosphoserine). Residues Gly18–Gly33 are compositionally biased toward low complexity. 2 positions are modified to phosphoserine: Ser39 and Ser55. A Phosphothreonine modification is found at Thr117. A phosphoserine mark is found at Ser120, Ser123, and Ser147. A helical membrane pass occupies residues Phe227–Phe247. At Tyr248–His731 the chain is on the perinuclear space side. Coiled coils occupy residues Gln396–Glu452 and Arg486–Arg519. Residues Ala521–His731 are sufficient for interaction with SYNE1 and SYNE2. The SUN domain occupies Gly569–Ala730. N-linked (GlcNAc...) asparagine glycosylation is present at Asn650.

As to quaternary structure, core component of the LINC complex which is composed of inner nuclear membrane SUN domain-containing proteins coupled to outer nuclear membrane KASH domain-containing nesprins. SUN and KASH domain-containing proteins seem to bind each other promiscuously; however, differentially expression of LINC complex constituents is giving rise to specific assemblies. At least SUN1/2-containing core LINC complexes are proposed to be hexameric composed of three protomers of each KASH and SUN domain-containing protein. Interacts with SYNE2; the SUN2:SYNE2/KASH2 LINC complex is a heterohexamer; the homotrimeric cloverleave-like conformation of the SUN domain is a prerequisite for LINC complex formation in which three separate SYNE2/KASH2 peptides bind at the interface of adjacent SUN domains. Component of a probable SUN2:KASH5 LINC complex. Interacts with SYNE1 and SYNE3; probably forming respective LINC complexes. Interacts with A-type lamin. Interaction with lamins B1 and C is hardly detectable. Interacts with EMD. Interacts with RAB5A. Interacts with TMEM43 and TMEM201. Interacts with IRAG2. In terms of processing, the disulfide bond with SYNE2 is required for stability of the SUN2:SYNE2/KASH2 LINC complex under tensile forces though not required for the interaction. The disulfide bond is proposed to be conserved in LINC complexes involved in force transmission. In terms of tissue distribution, highly expressed in heart, placenta and muscle.

It is found in the nucleus inner membrane. It localises to the nucleus envelope. The protein localises to the endosome membrane. Functionally, as a component of the LINC (LInker of Nucleoskeleton and Cytoskeleton) complex, involved in the connection between the nuclear lamina and the cytoskeleton. The nucleocytoplasmic interactions established by the LINC complex play an important role in the transmission of mechanical forces across the nuclear envelope and in nuclear movement and positioning. Specifically, SYNE2 and SUN2 assemble in arrays of transmembrane actin-associated nuclear (TAN) lines which are bound to F-actin cables and couple the nucleus to retrograde actin flow during actin-dependent nuclear movement. Required for interkinetic nuclear migration (INM) and essential for nucleokinesis and centrosome-nucleus coupling during radial neuronal migration in the cerebral cortex and during glial migration. Required for nuclear migration in retinal photoreceptor progenitors implicating association with cytoplasmic dynein-dynactin and kinesin motor complexes, and probably B-type lamins; SUN1 and SUN2 seem to act redundantly. The SUN1/2:KASH5 LINC complex couples telomeres to microtubules during meiosis; SUN1 and SUN2 seem to act at least partial redundantly. Anchors chromosome movement in the prophase of meiosis and is involved in selective gene expression of coding and non-coding RNAs needed for gametogenesis. Required for telomere attachment to nuclear envelope and gametogenesis. May also function on endocytic vesicles as a receptor for Rab5-GDP and participate in the activation of Rab5. This Mus musculus (Mouse) protein is SUN domain-containing protein 2.